The sequence spans 272 residues: Putative hydro-lyase Rpal_1947 (272 aa).

This sequence belongs to the D-glutamate cyclase family.

This Rhodopseudomonas palustris (strain TIE-1) protein is Putative hydro-lyase Rpal_1947.